Consider the following 555-residue polypeptide: Sulfite reductase [ferredoxin] (555 aa).

The interval M1–P22 is disordered. A cross-link (3'-(S-cysteinyl)-tyrosine (Tyr-Cys)) is located at residues Y69–C161. 4 residues coordinate [4Fe-4S] cluster: C417, C423, C463, and C467. A siroheme-binding site is contributed by C467.

The protein belongs to the nitrite and sulfite reductase 4Fe-4S domain family. In terms of assembly, monomer. The cofactor is siroheme. Requires [4Fe-4S] cluster as cofactor.

It carries out the reaction hydrogen sulfide + 6 oxidized [2Fe-2S]-[ferredoxin] + 3 H2O = sulfite + 6 reduced [2Fe-2S]-[ferredoxin] + 7 H(+). Its function is as follows. Catalyzes the reduction of sulfite to sulfide, a step in the biosynthesis of sulfur-containing amino acids and cofactors. The chain is Sulfite reductase [ferredoxin] (sir) from Mycobacterium bovis (strain ATCC BAA-935 / AF2122/97).